The following is a 375-amino-acid chain: Phosphoglucan phosphatase DSP4, amyloplastic (375 aa).

Residues 1 to 42 (MFCVQNLPRSSALPLQSFKSHQRRPPCSVNTLGVMSNVNLHR) constitute an amyloplast transit peptide. The segment at 49–71 (ISGPTSSAETSDANVEEEKSETY) is disordered. Residues 51–61 (GPTSSAETSDA) are compositionally biased toward polar residues. Residues 92-249 (NYNFIRPDLI…AADILTGLRK (158 aa)) enclose the Tyrosine-protein phosphatase domain. Cysteine 193 functions as the Phosphocysteine intermediate in the catalytic mechanism. 194–199 (TAGLGR) contributes to the substrate binding site. Residues 254-330 (LTWKNPDCTT…NKDGHVNNFV (77 aa)) form a polysaccharide binding region.

Expressed in phloem parenchyma of 16-24 week old seedlings and 2 year old trees (at protein level). Expressed in leaves of 16-24 week old seedlings and 2 year old trees.

The protein resides in the plastid. It localises to the amyloplast. The protein localises to the nucleus. Starch granule-associated phosphoglucan phosphatase involved in the control of starch accumulation. Acts as a major regulator of the initial steps of starch degradation at the granule surface. Functions during the day by dephosphorylating the night-accumulated phospho-oligosaccharides. Can release phosphate from both the C6 and the C3 positions. This chain is Phosphoglucan phosphatase DSP4, amyloplastic, found in Castanea sativa (Sweet chestnut).